The following is a 225-amino-acid chain: Phosphatidylserine decarboxylase proenzyme (225 aa).

Ser-182 serves as the catalytic Schiff-base intermediate with substrate; via pyruvic acid. Ser-182 carries the pyruvic acid (Ser); by autocatalysis modification.

The protein belongs to the phosphatidylserine decarboxylase family. PSD-A subfamily. As to quaternary structure, heterodimer of a large membrane-associated beta subunit and a small pyruvoyl-containing alpha subunit. Pyruvate serves as cofactor. Is synthesized initially as an inactive proenzyme. Formation of the active enzyme involves a self-maturation process in which the active site pyruvoyl group is generated from an internal serine residue via an autocatalytic post-translational modification. Two non-identical subunits are generated from the proenzyme in this reaction, and the pyruvate is formed at the N-terminus of the alpha chain, which is derived from the carboxyl end of the proenzyme. The post-translation cleavage follows an unusual pathway, termed non-hydrolytic serinolysis, in which the side chain hydroxyl group of the serine supplies its oxygen atom to form the C-terminus of the beta chain, while the remainder of the serine residue undergoes an oxidative deamination to produce ammonia and the pyruvoyl prosthetic group on the alpha chain.

It localises to the cell membrane. It catalyses the reaction a 1,2-diacyl-sn-glycero-3-phospho-L-serine + H(+) = a 1,2-diacyl-sn-glycero-3-phosphoethanolamine + CO2. It participates in phospholipid metabolism; phosphatidylethanolamine biosynthesis; phosphatidylethanolamine from CDP-diacylglycerol: step 2/2. Its function is as follows. Catalyzes the formation of phosphatidylethanolamine (PtdEtn) from phosphatidylserine (PtdSer). The chain is Phosphatidylserine decarboxylase proenzyme from Neorickettsia sennetsu (strain ATCC VR-367 / Miyayama) (Ehrlichia sennetsu).